We begin with the raw amino-acid sequence, 52 residues long: Rubredoxin (52 aa).

N-formylmethionine; partial is present on Met-1. A Rubredoxin-like domain is found at 1-52 (MKKYGCLVCGYVYDPAKGDPDHGIAPGTAFEDLPADWVCPLCGVSKDEFEPL). Residues Cys-6, Cys-9, Cys-39, and Cys-42 each coordinate Fe cation.

It belongs to the rubredoxin family. Fe(3+) serves as cofactor. Post-translationally, observed in four forms, with and without iron, and with and without formylation at Met-1.

Its function is as follows. Rubredoxin is a small nonheme, iron protein lacking acid-labile sulfide. Its single Fe, chelated to 4 Cys, functions as an electron acceptor and may also stabilize the conformation of the molecule. The protein is Rubredoxin of Heliobacterium mobile (Heliobacillus mobilis).